Here is a 326-residue protein sequence, read N- to C-terminus: MSSSSSVPAYLGDEDLTQETRALISSLPKEKGWLVSEIYEFQGLWHTQAILQGILICQKRFEAKDSDIILVTNPKSGTTWLKALVFALLNRHKFPVSSSGNHPLLVTNPHLLVPFLEGVYYESPDFDFSSLPSPRLMNTHISHLSLPESVKSSSCKIVYCCRNPKDMFVSLWHFGKKLAPEETADYPIEKAVEAFCEGKFIGGPFWDHILEYWYASRENPNKVLFVTYEELKKQTEVEMKRIAEFLECGFIEEEEVREIVKLCSFESLSNLEVNKEGKLPNGIETKTFFRKGEIGGWRDTLSESLAEEIDRTIEEKFKGSGLKFSS.

Residue 75 to 80 coordinates 3'-phosphoadenylyl sulfate; it reads KSGTTW. Histidine 140 (proton acceptor) is an active-site residue. Residues arginine 162, serine 170, tyrosine 228, and 290 to 292 each bind 3'-phosphoadenylyl sulfate; that span reads RKG.

The protein belongs to the sulfotransferase 1 family. As to quaternary structure, dimer. In terms of tissue distribution, expressed in the aerial parts of seedlings, in roots, leaves and flowers. Not detected in stems and siliques.

Its subcellular location is the cytoplasm. Its function is as follows. Sulfotransferase that utilizes 3'-phospho-5'-adenylyl sulfate (PAPS) as sulfonate donor to catalyze the stereospecific sulfate conjugation of 24-epibrassinosteroids. Preferred substrates are 24-epicathasterone and 6-deoxo-24-epicathasterone. Low activity with 22-deoxy-24-epiteasterone. No activity with 24-epimers catasterone and brassinolide. Sulfonates salicylic acid. May be involved in detoxification. Enhances plant response to pathogen infection and contributes to long distance signaling in systemic acquired resistance (SAR). The chain is Cytosolic sulfotransferase 12 (SOT12) from Arabidopsis thaliana (Mouse-ear cress).